Reading from the N-terminus, the 146-residue chain is Deoxyuridine 5'-triphosphate nucleotidohydrolase (146 aa).

Substrate contacts are provided by residues Arg-66–Gly-68, Asn-79, Thr-83–Asp-85, and Lys-93.

This sequence belongs to the dUTPase family. The cofactor is Mg(2+).

The catalysed reaction is dUTP + H2O = dUMP + diphosphate + H(+). It participates in pyrimidine metabolism; dUMP biosynthesis; dUMP from dCTP (dUTP route): step 2/2. Functionally, this enzyme is involved in nucleotide metabolism: it produces dUMP, the immediate precursor of thymidine nucleotides and it decreases the intracellular concentration of dUTP so that uracil cannot be incorporated into DNA. This Zymomonas mobilis subsp. mobilis (strain ATCC 31821 / ZM4 / CP4) protein is Deoxyuridine 5'-triphosphate nucleotidohydrolase.